A 221-amino-acid polypeptide reads, in one-letter code: Alpha-ketoglutarate-dependent dioxygenase alkB homolog 7, mitochondrial (221 aa).

The transit peptide at 1–23 (MAGSRRLAMRLLSGCAWVRGSDS) directs the protein to the mitochondrion. Positions 121 and 123 each coordinate Fe cation. A 2-oxoglutarate-binding site is contributed by Y165. Position 177 (H177) interacts with Fe cation. Residues 197 to 199 (RIS) and R203 contribute to the 2-oxoglutarate site.

This sequence belongs to the alkB family. Fe(2+) is required as a cofactor. As to expression, widely expressed.

Its subcellular location is the mitochondrion matrix. Functionally, may function as protein hydroxylase; can catalyze auto-hydroxylation at Leu-110 (in vitro), but this activity may be due to the absence of the true substrate. Required to induce programmed necrosis in response to DNA damage caused by cytotoxic alkylating agents. Acts by triggering the collapse of mitochondrial membrane potential and loss of mitochondrial function that leads to energy depletion and cell death. ALKBH7-mediated necrosis is probably required to prevent the accumulation of cells with DNA damage. Does not display DNA demethylase activity. Involved in fatty acid metabolism. The chain is Alpha-ketoglutarate-dependent dioxygenase alkB homolog 7, mitochondrial (Alkbh7) from Mus musculus (Mouse).